The following is an 82-amino-acid chain: Small ribosomal subunit protein bS18 (82 aa).

The disordered stretch occupies residues 1–20 (MVDINQIPTRRPFHRRRKTC).

Belongs to the bacterial ribosomal protein bS18 family. In terms of assembly, part of the 30S ribosomal subunit. Forms a tight heterodimer with protein bS6.

Functionally, binds as a heterodimer with protein bS6 to the central domain of the 16S rRNA, where it helps stabilize the platform of the 30S subunit. This Brucella anthropi (strain ATCC 49188 / DSM 6882 / CCUG 24695 / JCM 21032 / LMG 3331 / NBRC 15819 / NCTC 12168 / Alc 37) (Ochrobactrum anthropi) protein is Small ribosomal subunit protein bS18.